The following is a 156-amino-acid chain: uncharacterized protein (156 aa).

An N-terminal signal peptide occupies residues Met-1–Ala-18. Positions Gln-19–Lys-156 constitute a Thioredoxin domain. Cys-54 and Cys-57 are joined by a disulfide.

The protein belongs to the thioredoxin family.

This is an uncharacterized protein from Haemophilus influenzae (strain ATCC 51907 / DSM 11121 / KW20 / Rd).